The chain runs to 122 residues: Protein FAM223A (122 aa).

This sequence belongs to the FAM223 family.

The protein is Protein FAM223A (FAM223A) of Homo sapiens (Human).